Reading from the N-terminus, the 153-residue chain is 3-hydroxyacyl-[acyl-carrier-protein] dehydratase FabZ (153 aa).

H54 is a catalytic residue.

The protein belongs to the thioester dehydratase family. FabZ subfamily.

It is found in the cytoplasm. The enzyme catalyses a (3R)-hydroxyacyl-[ACP] = a (2E)-enoyl-[ACP] + H2O. Functionally, involved in unsaturated fatty acids biosynthesis. Catalyzes the dehydration of short chain beta-hydroxyacyl-ACPs and long chain saturated and unsaturated beta-hydroxyacyl-ACPs. This chain is 3-hydroxyacyl-[acyl-carrier-protein] dehydratase FabZ, found in Shewanella frigidimarina (strain NCIMB 400).